A 331-amino-acid polypeptide reads, in one-letter code: Phosphate acyltransferase (331 aa).

This sequence belongs to the PlsX family. Homodimer. Probably interacts with PlsY.

It localises to the cytoplasm. The enzyme catalyses a fatty acyl-[ACP] + phosphate = an acyl phosphate + holo-[ACP]. Its pathway is lipid metabolism; phospholipid metabolism. Catalyzes the reversible formation of acyl-phosphate (acyl-PO(4)) from acyl-[acyl-carrier-protein] (acyl-ACP). This enzyme utilizes acyl-ACP as fatty acyl donor, but not acyl-CoA. The sequence is that of Phosphate acyltransferase from Mesoplasma florum (strain ATCC 33453 / NBRC 100688 / NCTC 11704 / L1) (Acholeplasma florum).